A 605-amino-acid polypeptide reads, in one-letter code: Probable serine/threonine-protein kinase DDB_G0286481 (605 aa).

A helical transmembrane segment spans residues 5 to 25; sequence YQIFFLLYLLCILYVISCGYI. The N-linked (GlcNAc...) asparagine glycan is linked to Asn-53. Low complexity-rich tracts occupy residues 54–81 and 89–104; these read SSNN…NNNN and NCNN…NKSN. The disordered stretch occupies residues 54–170; it reads SSNNNNNNNN…LGGSMGSGSQ (117 aa). Asn-92, Asn-93, Asn-97, and Asn-101 each carry an N-linked (GlcNAc...) asparagine glycan. Basic residues predominate over residues 105–123; it reads IKNKQHHHHSNFRNRRGKS. Asn-127 is a glycosylation site (N-linked (GlcNAc...) asparagine). Positions 144 to 155 are enriched in polar residues; it reads QSSSYDTSELHQ. Residue Asn-280 is glycosylated (N-linked (GlcNAc...) asparagine). The region spanning 312–597 is the Protein kinase domain; the sequence is YEVIQKIGRG…AKEAMKHPYF (286 aa). ATP is bound by residues 318–326 and Lys-341; that span reads IGRGKYSEV. N-linked (GlcNAc...) asparagine glycosylation occurs at Asn-390. Asp-429 (proton acceptor) is an active-site residue. The N-linked (GlcNAc...) asparagine glycan is linked to Asn-601.

The protein belongs to the protein kinase superfamily. CMGC Ser/Thr protein kinase family.

The protein localises to the membrane. It catalyses the reaction L-seryl-[protein] + ATP = O-phospho-L-seryl-[protein] + ADP + H(+). The catalysed reaction is L-threonyl-[protein] + ATP = O-phospho-L-threonyl-[protein] + ADP + H(+). This chain is Probable serine/threonine-protein kinase DDB_G0286481, found in Dictyostelium discoideum (Social amoeba).